The sequence spans 313 residues: 4-diphosphocytidyl-2-C-methyl-D-erythritol kinase (313 aa).

Lys29 is an active-site residue. 113 to 123 (PMGGGVGGGSS) lines the ATP pocket. Asp155 is an active-site residue.

Belongs to the GHMP kinase family. IspE subfamily.

The enzyme catalyses 4-CDP-2-C-methyl-D-erythritol + ATP = 4-CDP-2-C-methyl-D-erythritol 2-phosphate + ADP + H(+). It participates in isoprenoid biosynthesis; isopentenyl diphosphate biosynthesis via DXP pathway; isopentenyl diphosphate from 1-deoxy-D-xylulose 5-phosphate: step 3/6. In terms of biological role, catalyzes the phosphorylation of the position 2 hydroxy group of 4-diphosphocytidyl-2C-methyl-D-erythritol. This chain is 4-diphosphocytidyl-2-C-methyl-D-erythritol kinase, found in Haemophilus influenzae (strain 86-028NP).